Reading from the N-terminus, the 322-residue chain is DNA repair and recombination protein RadA (322 aa).

105 to 112 is an ATP binding site; the sequence is GMYGSGKT.

This sequence belongs to the eukaryotic RecA-like protein family.

Functionally, involved in DNA repair and in homologous recombination. Binds and assemble on single-stranded DNA to form a nucleoprotein filament. Hydrolyzes ATP in a ssDNA-dependent manner and promotes DNA strand exchange between homologous DNA molecules. This chain is DNA repair and recombination protein RadA, found in Methanococcus maripaludis (strain C5 / ATCC BAA-1333).